We begin with the raw amino-acid sequence, 369 residues long: Uroporphyrinogen decarboxylase (369 aa).

Residues 28–32 (RQAGR), Asp-78, Tyr-154, Ser-209, and His-339 each bind substrate.

Belongs to the uroporphyrinogen decarboxylase family. In terms of assembly, homodimer.

It is found in the cytoplasm. The enzyme catalyses uroporphyrinogen III + 4 H(+) = coproporphyrinogen III + 4 CO2. Its pathway is porphyrin-containing compound metabolism; protoporphyrin-IX biosynthesis; coproporphyrinogen-III from 5-aminolevulinate: step 4/4. Its function is as follows. Catalyzes the decarboxylation of four acetate groups of uroporphyrinogen-III to yield coproporphyrinogen-III. The polypeptide is Uroporphyrinogen decarboxylase (Polaromonas naphthalenivorans (strain CJ2)).